We begin with the raw amino-acid sequence, 108 residues long: Urease subunit beta (108 aa).

Belongs to the urease beta subunit family. In terms of assembly, heterotrimer of UreA (gamma), UreB (beta) and UreC (alpha) subunits. Three heterotrimers associate to form the active enzyme.

The protein localises to the cytoplasm. The enzyme catalyses urea + 2 H2O + H(+) = hydrogencarbonate + 2 NH4(+). The protein operates within nitrogen metabolism; urea degradation; CO(2) and NH(3) from urea (urease route): step 1/1. The chain is Urease subunit beta from Proteus hauseri.